A 1826-amino-acid chain; its full sequence is ATPase family AAA domain-containing protein 5 (1826 aa).

Phosphoserine is present on Ser-44. A Glycyl lysine isopeptide (Lys-Gly) (interchain with G-Cter in SUMO2) cross-link involves residue Lys-127. 7 disordered regions span residues 170–254, 282–311, 323–367, 398–572, 588–623, 647–684, and 709–729; these read SIED…KRAD, PAVP…CEPS, AQVH…RKSN, QQFM…EPGS, RSCS…ARTS, KFTR…TSKN, and VVPL…KSPE. Residue Ser-215 is modified to Phosphoserine. Basic and acidic residues predominate over residues 243-254; that stretch reads NDSRTHATKRAD. Residues 298-311 show a composition bias toward low complexity; that stretch reads SGSEGELSGSCEPS. 2 positions are modified to phosphoserine: Ser-351 and Ser-366. An interaction with WDR48 region spans residues 365–381; the sequence is KSNVVIQEGQLELAVLE. Positions 418–442 are enriched in basic and acidic residues; that stretch reads KPLEKQKDPSEKSVHEGDSSSEKII. Polar residues predominate over residues 445-456; sequence PNIQRVSSQGCL. Positions 459–468 are enriched in basic and acidic residues; sequence HADRGSFPKE. A compositionally biased stretch (basic residues) spans 469–481; it reads KSKKPNKKGKKTR. The segment covering 487–505 has biased composition (basic and acidic residues); sequence NREENIQKEKTAFSLKDEQ. Over residues 540 to 559 the composition is skewed to polar residues; sequence DSVQMSLCNRNKSRSSSTPT. Phosphoserine is present on residues Ser-591 and Ser-603. 2 positions are modified to phosphoserine: Ser-727 and Ser-801. The disordered stretch occupies residues 965–1034; it reads GKQASPQLQP…NLDPSRDSGT (70 aa). Over residues 1006–1019 the composition is skewed to basic and acidic residues; it reads EEMKGRSKDLDERI. At Ser-1104 the chain carries Phosphoserine. 1119-1126 lines the ATP pocket; that stretch reads GPTGVGKT. The tract at residues 1183 to 1216 is disordered; sequence YNIGKSPKKLNSPGKVVTSPRKLPPSSPKTSGQK. An LXCXE motif motif is present at residues 1415-1419; it reads LVCSE. Disordered regions lie at residues 1527–1552 and 1592–1611; these read PASM…RKQK and SNPE…VPQP. The segment at 1612 to 1701 is interaction with RAD51 and RFC5; the sequence is PKTLAEKKCC…ATAEALSFTE (90 aa).

It belongs to the AAA ATPase family. In terms of assembly, component of a heteropentameric replication factor ATAD5 RFC-like complex composed of one large subunit (ATAD5) and four small subunits (RFC2, RFC3, RFC4 and RFC5). Within the ATAD5 RFC-like complex, interacts with RFC2, RFC4 and RFC5. Within the ATAD5 RFC-like complex, interacts directly via-N terminal with RAD51; the interactions is enhanced under replication stress. Interacts with RB1 predominantly in G1 phase via its LXCXE motif. Interacts with RAD9A in growing cells. The interaction with RAD9A is reduced after exposure to DNA replication-inhibiting agents. Interacts with BRD4. Interacts with PCNA. Interacts with deubiquitinating enzyme USP1, and its associated factor, WDR48. In terms of processing, ATR may stimulate the RAD9A dissociation. As to expression, expressed ubiquitously in all cell lines like teratocarcinoma, cell lymphoma, lymphoma.

The protein resides in the nucleus. Has an important role in DNA replication and in maintaining genome integrity during replication stress. Involved in a RAD9A-related damage checkpoint, a pathway that is important in determining whether DNA damage is compatible with cell survival or whether it requires cell elimination by apoptosis. Modulates the RAD9A interaction with BCL2 and thereby induces DNA damage-induced apoptosis. Promotes PCNA deubiquitination by recruiting the ubiquitin-specific protease 1 (USP1) and WDR48 thereby down-regulating the error-prone damage bypass pathway. As component of the ATAD5 RFC-like complex, regulates the function of the DNA polymerase processivity factor PCNA by unloading the ring-shaped PCNA homotrimer from DNA after replication during the S phase of the cell cycle. This seems to be dependent on its ATPase activity. Plays important roles in restarting stalled replication forks under replication stress, by unloading the PCNA homotrimer from DNA and recruiting RAD51 possibly through an ATR-dependent manner. Ultimately this enables replication fork regression, breakage, and eventual fork restart. Both the PCNA unloading activity and the interaction with WDR48 are required to efficiently recruit RAD51 to stalled replication forks. Promotes the generation of MUS81-mediated single-stranded DNA-associated breaks in response to replication stress, which is an alternative pathway to restart stalled/regressed replication forks. The polypeptide is ATPase family AAA domain-containing protein 5 (Atad5) (Mus musculus (Mouse)).